Reading from the N-terminus, the 169-residue chain is Lipoprotein signal peptidase (169 aa).

2 helical membrane-spanning segments follow: residues 59-79 and 84-104; these read PTVL…YVIW and TTLF…NMID. Residues Asp113 and Asp139 contribute to the active site. A helical membrane pass occupies residues 132–152; that stretch reads WPIFNIADSAITIGACMLMIF.

The protein belongs to the peptidase A8 family.

Its subcellular location is the cell inner membrane. It catalyses the reaction Release of signal peptides from bacterial membrane prolipoproteins. Hydrolyzes -Xaa-Yaa-Zaa-|-(S,diacylglyceryl)Cys-, in which Xaa is hydrophobic (preferably Leu), and Yaa (Ala or Ser) and Zaa (Gly or Ala) have small, neutral side chains.. The protein operates within protein modification; lipoprotein biosynthesis (signal peptide cleavage). Functionally, this protein specifically catalyzes the removal of signal peptides from prolipoproteins. The polypeptide is Lipoprotein signal peptidase (Pelodictyon phaeoclathratiforme (strain DSM 5477 / BU-1)).